A 471-amino-acid chain; its full sequence is Collagen alpha-3(IV) chain (471 aa).

The tract at residues 1-238 (GLPGRKGPVG…KGKPGDTGPP (238 aa)) is triple-helical region. The disordered stretch occupies residues 1–241 (GLPGRKGPVG…PGDTGPPAAG (241 aa)). Residues 52 to 61 (MPGPPGPPGS) show a composition bias toward pro residues. The short motif at 106–108 (RGD) is the Cell attachment site element. Over residues 127–141 (PGPPGPPGQSGPKGP) the composition is skewed to pro residues. Positions 165–174 (SAGEPGMQGE) are enriched in low complexity. A compositionally biased stretch (pro residues) spans 175–187 (PGPPGPPGDPGPC). P232 and P238 each carry hydroxyproline. In terms of domain architecture, Collagen IV NC1 spans 246-470 (GFVFTRHSQT…SRCQVCMKMR (225 aa)). 6 disulfides stabilise this stretch: C261–C352, C294–C349, C306–C312, C371–C466, C405–C463, and C417–C423. Residue M334 forms an S-Lysyl-methionine sulfilimine (Met-Lys) (interchain with K-452) linkage. An S-Lysyl-methionine sulfilimine (Lys-Met) (interchain with M-334) cross-link involves residue K452.

The protein belongs to the type IV collagen family. There are six type IV collagen isoforms, alpha 1(IV)-alpha 6(IV), each of which can form a triple helix structure with 2 other chains to generate type IV collagen network. The alpha 3(IV) chain forms a triple helical protomer with alpha 4(IV) and alpha 5(IV); this triple helical structure dimerizes through NC1-NC1 domain interactions such that the alpha 3(IV), alpha 4(IV) and alpha 5(IV) chains of one protomer connect with the alpha 5(IV), alpha 4(IV) and alpha 3(IV) chains of the opposite promoter, respectively. Interacts with ITGB3. Associates with LAMB2 at the neuromuscular junction and in GBM. Prolines at the third position of the tripeptide repeating unit (G-X-Y) are hydroxylated in some or all of the chains. Post-translationally, type IV collagens contain numerous cysteine residues which are involved in inter- and intramolecular disulfide bonding. 12 of these, located in the NC1 domain, are conserved in all known type IV collagens. In terms of processing, the trimeric structure of the NC1 domains is stabilized by covalent bonds between Lys and Met residues. Phosphorylated. Thought to be phosphorylated by CERT, but CERT does not have kinase activity.

The protein resides in the secreted. The protein localises to the extracellular space. Its subcellular location is the extracellular matrix. It is found in the basement membrane. In terms of biological role, type IV collagen is the major structural component of glomerular basement membranes (GBM), forming a 'chicken-wire' meshwork together with laminins, proteoglycans and entactin/nidogen. In Bos taurus (Bovine), this protein is Collagen alpha-3(IV) chain (COL4A3).